Consider the following 219-residue polypeptide: Transmembrane emp24 domain-containing protein 10 (219 aa).

The first 31 residues, 1 to 31 (MSGSSGPLSWPGPRPCALLFLLLLGPSSVLA), serve as a signal peptide directing secretion. The segment at 1–142 (MSGSSGPLSW…KNYEEIAKVE (142 aa)) is required for interaction with STX17. Over 32 to 185 (ISFHLPVNSR…RDTNESTNTR (154 aa)) the chain is Lumenal. The GOLD domain maps to 41–193 (RKCLREEIHK…TRVLYFSIFS (153 aa)). The segment at 147-178 (LEVELRRLEDLSESIVNDFAYMKKREEEMRDT) is required for TMED10 and TMED2 cis-Golgi network localization. Arg-171 and Arg-176 each carry dimethylated arginine. N-linked (GlcNAc...) asparagine glycosylation is present at Asn-179. Residues 186–206 (VLYFSIFSMLCLIGLATWQVF) form a helical membrane-spanning segment. Residues 204–219 (QVFYLRRFFKAKKLIE) form an interaction with COPG1 region. The Cytoplasmic portion of the chain corresponds to 207–219 (YLRRFFKAKKLIE). Residues 207-219 (YLRRFFKAKKLIE) are interaction with ARF1 and IL1B. A COPII vesicle coat-binding motif is present at residues 211–212 (FF). Residues 211–219 (FFKAKKLIE) carry the COPI vesicle coat-binding motif.

The protein belongs to the EMP24/GP25L family. Predominantly dimeric and to a lesser extent monomeric in the ER. Monomer and dimer in ERGIC and cis-Golgi network. Forms homooligomer (via GOLD domain); the assembly is promoted by direct binding with leaderless cargos and may form a protein channel that facilitates cargo entry into the ERGIC. Forms heterooligomeric complexes with other members of the p24 family such as TMED2, TMED7 and TMED9. Interacts (via GOLD domain) with TMED2 (via GOLD domain); the complex is required for export of TMED10 from the ER to the cis-Golgi network; the complex is proposed to be involved in cis-Golgi network dynamics and / or biogenesis. Associates with the COPI vesicle coat subunits (coatomer). Tetramerization of the cytoplasmic domain at the Golgi membrane in vitro; the complex is proposed to interact with COPI coatomer and induce budding of the vesicles. Interacts with COPG1; the interaction involves TMED10 homodimer. Interacts with ARF1 (GDP-bound); the interaction probably involves a TMED10 oligomer. Interacts with SEC23A, SEC24B, SEC24C and SEC24D components of the coat protein complex II/COPII, indicative of an association of TMED10 with the COPII vesicle coat. Interacts with CD59. Interacts with MPPE1/PGAP5; the complex might recruit and sort GPI-anchored proteins to the ER-exit site, or the interaction might lead to recycling of PGAP5 between the ER and the Golgi. Interacts with F2LR1/PAR2. Interacts with KDELR2/ERD2; the interaction is disrupted by KDELR2 ligand. Found in a complex composed at least of SURF4, TMED2 and TMED10. Associates with the presenilin-dependent gamma-secretase complex. Interacts with STX17; the interaction is direct. Interacts with IL-1; the interaction is direct. Interacts with RAB21 (active GTP-bound form); the interaction is indirect and regulates TMED10 abundance and localization at the Golgi.

Its subcellular location is the endoplasmic reticulum membrane. It is found in the endoplasmic reticulum-Golgi intermediate compartment membrane. The protein resides in the golgi apparatus membrane. The protein localises to the golgi apparatus. It localises to the cis-Golgi network membrane. Its subcellular location is the trans-Golgi network membrane. It is found in the cytoplasmic vesicle. The protein resides in the secretory vesicle membrane. The protein localises to the cell membrane. It localises to the melanosome. In terms of biological role, cargo receptor involved in protein vesicular trafficking and quality control in the endoplasmic reticulum (ER) and Golgi. The p24 protein family is a group of transmembrane proteins that bind coat protein complex I/COPI and coat protein complex II/COPII involved in vesicular trafficking between the membranes. Acts at the lumenal side for incorporation of secretory cargo molecules into transport vesicles and involved in vesicle coat formation at the cytoplasmic side. Mainly functions in the early secretory pathway and cycles between the ER, ER-Golgi intermediate compartment (ERGIC) and Golgi, mediating cargo transport through COPI and COPII-coated vesicles. In COPII vesicle-mediated anterograde transport, involved in the transport of GPI-anchored proteins by acting together with TMED2 as their cargo receptor; the function specifically implies SEC24C and SEC24D of the COPII vesicle coat and lipid raft-like microdomains of the ER. Recognizes GPI anchors structural remodeled in the ER by the GPI inositol-deacylase/PGAP1 and the metallophosphoesterase MPPE1/PGAP5. In COPI vesicle-mediated retrograde transport, involved in the biogenesis of COPI vesicles and vesicle coat recruitment. Involved in trafficking of amyloid beta A4 protein and soluble APP-beta release (independent from the modulation of gamma-secretase activity). Involved in the KDELR2-mediated retrograde transport of the toxin A subunit (CTX-A-K63)together with COPI and the COOH terminus of KDELR2. On Golgi membranes, acts as a primary receptor for ARF1-GDP, a GTP-binding protein involved in COPI-vesicle formation. Increases coatomer-dependent GTPase-activating activity of ARFGAP2 which mediates the hydrolysis of ARF1-bound GTP and therefore modulates protein trafficking from the Golgi apparatus. Involved in the exocytic trafficking of G protein-coupled receptors F2LR1/PAR2 (trypsin and tryspin-like enzyme receptor), OPRM1 (opioid receptor) and P2RY4 (UTD and UDP receptor) from the Golgi to the plasma membrane, thus contributing to receptor resensitization. In addition to its cargo receptor activity, may also act as a protein channel after oligomerization, facilitating the post-translational entry of leaderless cytoplasmic cargo into the ERGIC. Involved in the translocation into ERGIC, the vesicle entry and the secretion of leaderless cargos (lacking the secretion signal sequence), including the mature form of interleukin 1/IL-1 family members, the alpha-crystallin B chain HSPB5, the carbohydrate-binding proteins galectin-1/LGALS1 and galectin-3/LGALS3, the microtubule-associated protein Tau/MAPT, and the annexin A1/ANXA1; the translocation process is dependent on cargo protein unfolding and enhanced by chaperones HSP90AB1 and HSP90B1/GRP9. Could also associates with the presenilin-dependent gamma-secretase complex in order to regulate gamma-cleavages of the amyloid beta A4 protein to yield amyloid-beta 40/Abeta40. This is Transmembrane emp24 domain-containing protein 10 (TMED10) from Mesocricetus auratus (Golden hamster).